The sequence spans 938 residues: Scm-like with four MBT domains protein 2 (938 aa).

Residues 1 to 32 (MERYLPVSKKRNSSSSLEKITGSANGNGTLYS) form a disordered region. A compositionally biased stretch (polar residues) spans 13-30 (SSSSLEKITGSANGNGTL). MBT repeat units lie at residues 43–143 (FSWG…LRPP), 151–255 (SDWT…MDPP), 265–371 (FEWK…LAPP), and 379–475 (FNWV…LTTP). Positions 742–836 (PEGIPESLPE…TVPTTASSNN (95 aa)) are disordered. 2 stretches are compositionally biased toward basic and acidic residues: residues 765-777 (TEQEKRETLDTAR) and 809-822 (RNSEALKRPPVERA). The region spanning 868-931 (WSVTDVVRFI…CHQIERVKVA (64 aa)) is the SAM domain.

Interacts with YY1. Interacts with methylated histones H3K9me2 and H4K20me2. In terms of tissue distribution, expressed in testis and, at much lower levels, in ovary.

The protein resides in the nucleus. Its function is as follows. Transcriptional repressor of HOXB13 gene. The protein is Scm-like with four MBT domains protein 2 (Sfmbt2) of Mus musculus (Mouse).